A 454-amino-acid polypeptide reads, in one-letter code: (Z)-3-hexen-1-ol acetyltransferase (454 aa).

Active-site proton acceptor residues include His174 and Asp389.

It belongs to the plant acyltransferase family. Expressed in leaves and stems. Lower levels in flowers and barely detected in roots and siliques.

It catalyses the reaction (3Z)-hex-3-en-1-ol + acetyl-CoA = (3Z)-hex-3-en-1-yl acetate + CoA. Its activity is regulated as follows. Inhibited by magnesium, calcium, cobalt, zinc and copper. Its function is as follows. Acyltransferase involved in the production of green leaf volatiles (GLVs). Uses acetyl-CoA as substrate, but not malonyl-CoA or benzoyl-CoA. Prefers primary, medium-chain-length, aliphatic alcohols. In Arabidopsis thaliana (Mouse-ear cress), this protein is (Z)-3-hexen-1-ol acetyltransferase (CHAT).